We begin with the raw amino-acid sequence, 279 residues long: Small ribosomal subunit protein uS2 (279 aa).

A disordered region spans residues 255–279 (LLAGATTAAPEAAAGEAAAAPEQSS).

Belongs to the universal ribosomal protein uS2 family.

The chain is Small ribosomal subunit protein uS2 from Mycolicibacterium gilvum (strain PYR-GCK) (Mycobacterium gilvum (strain PYR-GCK)).